A 355-amino-acid chain; its full sequence is UDP-N-acetylglucosamine--N-acetylmuramyl-(pentapeptide) pyrophosphoryl-undecaprenol N-acetylglucosamine transferase (355 aa).

UDP-N-acetyl-alpha-D-glucosamine-binding positions include 15 to 17 (TGG), Asn127, Arg163, Ser191, Ile244, 263 to 268 (ALTVSE), and Gln288.

It belongs to the glycosyltransferase 28 family. MurG subfamily.

The protein resides in the cell inner membrane. It catalyses the reaction di-trans,octa-cis-undecaprenyl diphospho-N-acetyl-alpha-D-muramoyl-L-alanyl-D-glutamyl-meso-2,6-diaminopimeloyl-D-alanyl-D-alanine + UDP-N-acetyl-alpha-D-glucosamine = di-trans,octa-cis-undecaprenyl diphospho-[N-acetyl-alpha-D-glucosaminyl-(1-&gt;4)]-N-acetyl-alpha-D-muramoyl-L-alanyl-D-glutamyl-meso-2,6-diaminopimeloyl-D-alanyl-D-alanine + UDP + H(+). It participates in cell wall biogenesis; peptidoglycan biosynthesis. In terms of biological role, cell wall formation. Catalyzes the transfer of a GlcNAc subunit on undecaprenyl-pyrophosphoryl-MurNAc-pentapeptide (lipid intermediate I) to form undecaprenyl-pyrophosphoryl-MurNAc-(pentapeptide)GlcNAc (lipid intermediate II). The polypeptide is UDP-N-acetylglucosamine--N-acetylmuramyl-(pentapeptide) pyrophosphoryl-undecaprenol N-acetylglucosamine transferase (Shigella flexneri serotype 5b (strain 8401)).